The chain runs to 338 residues: Heat-inducible transcription repressor HrcA (338 aa).

This sequence belongs to the HrcA family.

Negative regulator of class I heat shock genes (grpE-dnaK-dnaJ and groELS operons). Prevents heat-shock induction of these operons. In Nitrosomonas eutropha (strain DSM 101675 / C91 / Nm57), this protein is Heat-inducible transcription repressor HrcA.